We begin with the raw amino-acid sequence, 466 residues long: Cysteine--tRNA ligase (466 aa).

A Zn(2+)-binding site is contributed by C28. The short motif at 30-40 is the 'HIGH' region element; the sequence is PTVYNFFHIGN. Zn(2+)-binding residues include C208, H233, and E237. The 'KMSKS' region motif lies at 265–269; sequence KMSKS. K268 is an ATP binding site.

This sequence belongs to the class-I aminoacyl-tRNA synthetase family. Monomer. Zn(2+) is required as a cofactor.

The protein localises to the cytoplasm. The enzyme catalyses tRNA(Cys) + L-cysteine + ATP = L-cysteinyl-tRNA(Cys) + AMP + diphosphate. The polypeptide is Cysteine--tRNA ligase (Clostridium perfringens (strain ATCC 13124 / DSM 756 / JCM 1290 / NCIMB 6125 / NCTC 8237 / Type A)).